The chain runs to 215 residues: Glutathione S-transferase D2 (215 aa).

The GST N-terminal domain maps to 1–80 (MDFYYMPGGG…YLVEKYGKDD (80 aa)). Glutathione-binding positions include 50–52 (HTI) and 64–66 (ESR). The GST C-terminal domain occupies 86 to 212 (DPKKRAVINQ…MKALFDARKL (127 aa)).

It belongs to the GST superfamily. Delta family. Homodimer.

It catalyses the reaction RX + glutathione = an S-substituted glutathione + a halide anion + H(+). Functionally, conjugation of reduced glutathione to a wide number of exogenous and endogenous hydrophobic electrophiles. May be involved in detoxification. The sequence is that of Glutathione S-transferase D2 from Drosophila melanogaster (Fruit fly).